We begin with the raw amino-acid sequence, 365 residues long: Nicotinate N-methyltransferase 1 (365 aa).

Asp-232 contacts S-adenosyl-L-methionine.

The protein belongs to the class I-like SAM-binding methyltransferase superfamily. Cation-independent O-methyltransferase family.

The catalysed reaction is nicotinate + S-adenosyl-L-methionine = N-methylnicotinate + S-adenosyl-L-homocysteine. Involved in nicotinate detoxification in planta. Catalyzes the conversion of nicotinate to N-methylnicotinate, which is a detoxified form of endogenous nicotinate in planta. This is Nicotinate N-methyltransferase 1 from Oryza sativa subsp. japonica (Rice).